Reading from the N-terminus, the 140-residue chain is UPF0134 protein MPN_094 (140 aa).

It belongs to the UPF0134 family.

This chain is UPF0134 protein MPN_094, found in Mycoplasma pneumoniae (strain ATCC 29342 / M129 / Subtype 1) (Mycoplasmoides pneumoniae).